We begin with the raw amino-acid sequence, 132 residues long: ATP synthase epsilon chain (132 aa).

The protein belongs to the ATPase epsilon chain family. F-type ATPases have 2 components, CF(1) - the catalytic core - and CF(0) - the membrane proton channel. CF(1) has five subunits: alpha(3), beta(3), gamma(1), delta(1), epsilon(1). CF(0) has three main subunits: a, b and c.

Its subcellular location is the cell inner membrane. Produces ATP from ADP in the presence of a proton gradient across the membrane. The chain is ATP synthase epsilon chain from Anaeromyxobacter dehalogenans (strain 2CP-C).